The sequence spans 1935 residues: Myosin-7 (1935 aa).

Positions 32 to 81 (DLKKDVYVPDDKEEFVKAKILSREGGKVTAETEHGKTVTVKEDQVLQQNP) constitute a Myosin N-terminal SH3-like domain. A Myosin motor domain is found at 85-778 (DKIEDMAMLT…LLGLLEEMRD (694 aa)). Residue Lys129 is modified to N6,N6,N6-trimethyllysine. Position 178–185 (178–185 (GESGAGKT)) interacts with ATP. Thr378 is subject to Phosphothreonine. Actin-binding regions lie at residues 655–677 (LNKL…IPNE) and 757–771 (KFGH…GLLG). Residues 781–810 (LSRIITRIQAQSRGVLSRMEFKKLLERRDS) enclose the IQ domain. Positions 839–1935 (LLKSAETEKE…DIGTKGLNEE (1097 aa)) form a coiled coil. 2 positions are modified to phosphoserine: Ser1137 and Ser1269. Position 1282 is a phosphothreonine (Thr1282). Tyr1308 carries the post-translational modification Phosphotyrosine. Thr1309 is modified (phosphothreonine). Ser1510 is subject to Phosphoserine. The residue at position 1513 (Thr1513) is a Phosphothreonine. Residues 1907 to 1935 (EERADIAESQVNKLRAKSRDIGTKGLNEE) form a disordered region. The segment covering 1923 to 1935 (KSRDIGTKGLNEE) has biased composition (basic and acidic residues).

Belongs to the TRAFAC class myosin-kinesin ATPase superfamily. Myosin family. As to quaternary structure, muscle myosin is a hexameric protein that consists of 2 heavy chain subunits (MHC), 2 alkali light chain subunits (MLC) and 2 regulatory light chain subunits (MLC-2). Interacts with ECPAS. Interacts (via C-terminus) with LRRC39.

Its subcellular location is the cytoplasm. The protein resides in the myofibril. The protein localises to the sarcomere. Functionally, myosins are actin-based motor molecules with ATPase activity essential for muscle contraction. Forms regular bipolar thick filaments that, together with actin thin filaments, constitute the fundamental contractile unit of skeletal and cardiac muscle. The sequence is that of Myosin-7 (MYH7) from Sus scrofa (Pig).